A 511-amino-acid polypeptide reads, in one-letter code: LEM domain-containing protein 2 (511 aa).

Ala2 is modified (N-acetylalanine). The LEM domain occupies 2–42 (AGLSDLELRRELQALGFQPGPITDTTRNVYRNKLRRLRGEA). 2 disordered regions span residues 18-110 (FQPG…SDAS) and 128-206 (GLSY…AGRT). A compositionally biased stretch (basic and acidic residues) spans 38 to 80 (LRGEARLRDDERLREDAGPREDAGPRGPERQREEARLREEAPL). An interaction with lamin A/C complexes region spans residues 80 to 112 (LRARPAASVLRSEPWPLSPSPPAPSAASDASGP). The segment at 80–141 (LRARPAASVL…PPHAGPGPLR (62 aa)) is required for nuclear retention and interaction with LMNA isoform C. Low complexity-rich tracts occupy residues 81–94 (RARP…SEPW) and 172–183 (APPSASARPHSA). Helical transmembrane passes span 221–241 (LLLW…WVKM) and 385–405 (VTHV…LILL). The interval 403–511 (ILLKYRWRKL…KPSSFSDSER (109 aa)) is winged-Helix (WH). Ser505, Ser507, and Ser509 each carry phosphoserine.

As to quaternary structure, interacts (via N-terminus) with LMNA isoform C (via C-terminus) (in vitro). Interacts (via LEM domain) with BANF1. Interacts (via C-terminus) with CHMP7. Interacts (via N-terminus) with tubulin; the interaction causes microtubule bundling and stabilization (in vitro). Post-translationally, phosphorylated; strongly phosphorylated in mitosis compared to G1/S. Ubiquitously expressed, including liver, brain, heart, skeletal muscle, lung, testis, spleen, kidney and white adipose tissue.

The protein localises to the nucleus inner membrane. It localises to the nucleus envelope. Its subcellular location is the cytoplasm. The protein resides in the cytoskeleton. It is found in the spindle. Its function is as follows. Nuclear lamina-associated inner nuclear membrane protein that is involved in nuclear structure organization and maintenance of nuclear envelope (NE) integrity and NE reformation after mitosis. Plays a role as transmembrane adapter for the endosomal sorting complexes required for transport (ESCRT), and is thereby involved in ESCRT-mediated NE reformation. Promotes ESCRT-mediated NE closure by recruiting CHMP7 and downstream ESCRT-III proteins IST1/CHMP8 and CHMP2A to the reforming NE during anaphase. During nuclear reassembly, condenses into a liquid-like coating around microtubule spindles and coassembles with CHMP7 to form a macromolecular O-ring seal at the confluence between membranes, chromatin, and the spindle to facilitate early nuclear sealing. Plays a role in the organization of heterochromatin associated with the NE and in the maintenance of NE organization under mechanical stress. Required for embryonic development and is involved in regulation of several signaling pathways such as MAPK and AKT. Required for myoblast differentiation involving regulation of ERK signaling. Essential for cardiac homeostasis and proper heart function. The chain is LEM domain-containing protein 2 (Lemd2) from Mus musculus (Mouse).